The following is a 453-amino-acid chain: Bifunctional protein GlmU (453 aa).

The interval 1 to 225 (MNIVILAAGT…DWETLGVNSK (225 aa)) is pyrophosphorylase. UDP-N-acetyl-alpha-D-glucosamine-binding positions include 6–9 (LAAG), Lys-20, Gln-71, 76–77 (GT), 98–100 (YGD), Gly-135, Glu-150, Asn-165, and Asn-223. Mg(2+) is bound at residue Asp-100. Asn-223 provides a ligand contact to Mg(2+). The segment at 226-246 (AQLAELERIHQRNVADALLVE) is linker. The N-acetyltransferase stretch occupies residues 247-453 (GVTLADPARV…GYVRPVKKKS (207 aa)). UDP-N-acetyl-alpha-D-glucosamine is bound by residues Arg-329 and Lys-347. His-359 functions as the Proton acceptor in the catalytic mechanism. Residues Tyr-362 and Asn-373 each contribute to the UDP-N-acetyl-alpha-D-glucosamine site. Acetyl-CoA-binding positions include Ala-376, 382-383 (NY), Ser-401, and Ala-419.

In the N-terminal section; belongs to the N-acetylglucosamine-1-phosphate uridyltransferase family. It in the C-terminal section; belongs to the transferase hexapeptide repeat family. In terms of assembly, homotrimer. It depends on Mg(2+) as a cofactor.

Its subcellular location is the cytoplasm. It carries out the reaction alpha-D-glucosamine 1-phosphate + acetyl-CoA = N-acetyl-alpha-D-glucosamine 1-phosphate + CoA + H(+). It catalyses the reaction N-acetyl-alpha-D-glucosamine 1-phosphate + UTP + H(+) = UDP-N-acetyl-alpha-D-glucosamine + diphosphate. It participates in nucleotide-sugar biosynthesis; UDP-N-acetyl-alpha-D-glucosamine biosynthesis; N-acetyl-alpha-D-glucosamine 1-phosphate from alpha-D-glucosamine 6-phosphate (route II): step 2/2. The protein operates within nucleotide-sugar biosynthesis; UDP-N-acetyl-alpha-D-glucosamine biosynthesis; UDP-N-acetyl-alpha-D-glucosamine from N-acetyl-alpha-D-glucosamine 1-phosphate: step 1/1. Its pathway is bacterial outer membrane biogenesis; LPS lipid A biosynthesis. In terms of biological role, catalyzes the last two sequential reactions in the de novo biosynthetic pathway for UDP-N-acetylglucosamine (UDP-GlcNAc). The C-terminal domain catalyzes the transfer of acetyl group from acetyl coenzyme A to glucosamine-1-phosphate (GlcN-1-P) to produce N-acetylglucosamine-1-phosphate (GlcNAc-1-P), which is converted into UDP-GlcNAc by the transfer of uridine 5-monophosphate (from uridine 5-triphosphate), a reaction catalyzed by the N-terminal domain. This chain is Bifunctional protein GlmU, found in Burkholderia vietnamiensis (strain G4 / LMG 22486) (Burkholderia cepacia (strain R1808)).